The chain runs to 497 residues: Delayed-rectifier potassium channel regulatory subunit KCNS1 (497 aa).

The Cytoplasmic portion of the chain corresponds to 1–186 (MVSEFPGPGS…LTMENPGYSL (186 aa)). The chain crosses the membrane as a helical span at residues 187 to 208 (PSKLFSCVSIGVVLASIAAMCI). The Extracellular portion of the chain corresponds to 209–239 (HSLPEYQAREAAAAVAAVAAGRSAEDVRDDP). The helical transmembrane segment at 240–262 (VLRRLEYFCIAWFSFEVSSRLLL) threads the bilayer. Topologically, residues 263–273 (APSTRNFFCHP) are cytoplasmic. A helical membrane pass occupies residues 274 to 291 (LNLIDIVSVLPFYLTLLA). Residues 292–309 (GAALGDRRGASGEELGDL) are Extracellular-facing. The helical; Voltage-sensor transmembrane segment at 310–330 (GKVVQVFRLMRIFRVLKLARH) threads the bilayer. Topologically, residues 331–345 (STGLRSLGATLKHSY) are cytoplasmic. The helical transmembrane segment at 346–367 (REVGILLLYLAVGVSVFSGVAY) threads the bilayer. Residues 368 to 379 (TAEEKNVGFDTI) lie on the Extracellular side of the membrane. The segment at residues 380-391 (PACWWWGTVSMT) is an intramembrane region (helical). The short motif at 392–397 (TVGYGD) is the Selectivity filter element. The stretch at 392-399 (TVGYGDVV) is an intramembrane region. Topologically, residues 400–406 (PETVAGK) are extracellular. The chain crosses the membrane as a helical span at residues 407–435 (LAASGCILGGILVVALPITIIFNKFSHFY). At 436–497 (RRQKALEAAV…PSEPAKSHSY (62 aa)) the chain is on the cytoplasmic side. Residues 464 to 497 (SDVSLETSRETSQEGRSTDLETQAPSEPAKSHSY) are disordered. Residues 470 to 482 (TSRETSQEGRSTD) show a composition bias toward basic and acidic residues.

It belongs to the potassium channel family. S (TC 1.A.1.2) subfamily. Kv9.1/KCNS1 sub-subfamily. As to quaternary structure, heterotetramer with KCNB1. Heterotetramer with KCNB2. Does not form homomultimers. In terms of tissue distribution, highly expressed in brain, but not in the other tissues tested.

Its subcellular location is the cell membrane. Functionally, potassium channel regulatory subunit that modulate the delayed rectifier voltage-gated potassium channel activity of KCNB1 and KCNB2 by altering their kinetics, expression levels, and shifting the half-inactivation potential to more polarized values. While it does not form functional channels on its own, it can form functional heterotetrameric channels with KCNB1 and KCNB2. Each regulatory subunit has unique regulatory properties that can lead to extensive inhibition, significant changes in kinetics, and/or substantial shifts in the voltage dependencies of the inactivation process. This chain is Delayed-rectifier potassium channel regulatory subunit KCNS1, found in Rattus norvegicus (Rat).